The primary structure comprises 104 residues: Protein ArtA (104 aa).

This is Protein ArtA (artA) from Escherichia coli (strain K12).